The primary structure comprises 420 residues: Glucose-1-phosphate adenylyltransferase (420 aa).

Alpha-D-glucose 1-phosphate-binding positions include Y107, G173, 188 to 189 (EK), and S206.

This sequence belongs to the bacterial/plant glucose-1-phosphate adenylyltransferase family. Homotetramer.

It catalyses the reaction alpha-D-glucose 1-phosphate + ATP + H(+) = ADP-alpha-D-glucose + diphosphate. It participates in glycan biosynthesis; glycogen biosynthesis. Functionally, involved in the biosynthesis of ADP-glucose, a building block required for the elongation reactions to produce glycogen. Catalyzes the reaction between ATP and alpha-D-glucose 1-phosphate (G1P) to produce pyrophosphate and ADP-Glc. The chain is Glucose-1-phosphate adenylyltransferase from Shewanella sp. (strain W3-18-1).